The chain runs to 317 residues: Acetyl-coenzyme A carboxylase carboxyl transferase subunit alpha (317 aa).

Residues 37 to 292 (EINKKLEQTK…ADYITKGYNE (256 aa)) form the CoA carboxyltransferase C-terminal domain.

This sequence belongs to the AccA family. Acetyl-CoA carboxylase is a heterohexamer composed of biotin carboxyl carrier protein (AccB), biotin carboxylase (AccC) and two subunits each of ACCase subunit alpha (AccA) and ACCase subunit beta (AccD).

The protein localises to the cytoplasm. The catalysed reaction is N(6)-carboxybiotinyl-L-lysyl-[protein] + acetyl-CoA = N(6)-biotinyl-L-lysyl-[protein] + malonyl-CoA. It participates in lipid metabolism; malonyl-CoA biosynthesis; malonyl-CoA from acetyl-CoA: step 1/1. Its function is as follows. Component of the acetyl coenzyme A carboxylase (ACC) complex. First, biotin carboxylase catalyzes the carboxylation of biotin on its carrier protein (BCCP) and then the CO(2) group is transferred by the carboxyltransferase to acetyl-CoA to form malonyl-CoA. The chain is Acetyl-coenzyme A carboxylase carboxyl transferase subunit alpha from Flavobacterium johnsoniae (strain ATCC 17061 / DSM 2064 / JCM 8514 / BCRC 14874 / CCUG 350202 / NBRC 14942 / NCIMB 11054 / UW101) (Cytophaga johnsonae).